Reading from the N-terminus, the 152-residue chain is uncharacterized protein (152 aa).

A helical membrane pass occupies residues T7–S27.

Its subcellular location is the membrane. This is an uncharacterized protein from Methanocaldococcus jannaschii (strain ATCC 43067 / DSM 2661 / JAL-1 / JCM 10045 / NBRC 100440) (Methanococcus jannaschii).